The following is a 555-amino-acid chain: Natural resistance-associated macrophage protein 1 (555 aa).

Topologically, residues 1–63 (MSGSGPAMAS…STPGFSFRKL (63 aa)) are cytoplasmic. The chain crosses the membrane as a helical span at residues 64-81 (WAFTGPGFLMSIAYLDPG). Residues 82–90 (NVESDLQCG) are Extracellular-facing. A helical transmembrane segment spans residues 91–110 (AVAGFKLLWVLLWATVLGLL). Residues 111–147 (CQRLAIRLGVVTGKDLAEICYLYYPRVPRVLLWLMME) lie on the Cytoplasmic side of the membrane. The helical transmembrane segment at 148-168 (IAIIGSDMQEVIGTAIAFSLL) threads the bilayer. The Extracellular portion of the chain corresponds to 169 to 172 (SAGR). The chain crosses the membrane as a helical span at residues 173–192 (IPLWGGVLITITDTLFFLFL). Residues 193–201 (DKYGLRKLE) are Cytoplasmic-facing. The chain crosses the membrane as a helical span at residues 202–222 (AFFGFLITIMALTFGYEYVMV). The Extracellular portion of the chain corresponds to 223-245 (RPAQTEVLKGIFLPYCPGCGREE). Residues 246 to 264 (LLQAVGIVGAIIMPHNIFL) form a helical membrane-spanning segment. Topologically, residues 265–292 (HSSLVKTRAIDRSKKEEVKEANMYFLTE) are cytoplasmic. The helical transmembrane segment at 293–312 (SCLALFVSFLINLFVMAVFG) threads the bilayer. The Extracellular segment spans residues 313–354 (EAFYHQRNEDVHNKCVNSSVSRYASIFPINNETVSVDIYQGG). Asn329 and Asn343 each carry an N-linked (GlcNAc...) asparagine glycan. Residues 355-374 (VILGCYFGAAALYIWAVGIL) traverse the membrane as a helical segment. The Cytoplasmic portion of the chain corresponds to 375-405 (AAGQSSTMTGTYAGQFVMEGFLQLRWSRFTR). A helical membrane pass occupies residues 406–423 (VLFTRSLAILPTLFVAAF). Over 424–434 (RDVSQLTGMND) the chain is Extracellular. The chain crosses the membrane as a helical span at residues 435–455 (LLNVLQSILLPFAVLPVLTFT). At 456 to 471 (SLRPLMHDFANGLLGQ) the chain is on the cytoplasmic side. A helical transmembrane segment spans residues 472–493 (VLMSLITGLVCAINVYFVVDFL). Residues 494–501 (PTLRGLGY) are Extracellular-facing. The helical transmembrane segment at 502–521 (LIPLGLLLVAYVAFVTYLLW) threads the bilayer. At 522-555 (TCSIAHGARFLARGRYNRFSFDVTADVPGLAGPH) the chain is on the cytoplasmic side.

Belongs to the NRAMP family. Macrophages; spleen and thymus and at lower level in liver and lung.

It localises to the late endosome membrane. The protein localises to the lysosome membrane. The catalysed reaction is Zn(2+)(in) + H(+)(out) = Zn(2+)(out) + H(+)(in). It catalyses the reaction Fe(2+)(in) + H(+)(out) = Fe(2+)(out) + H(+)(in). It carries out the reaction Mn(2+)(in) + H(+)(out) = Mn(2+)(out) + H(+)(in). Its function is as follows. Macrophage-specific antiporter that fluxes metal ions in either direction against a proton gradient. Localized to late endosomal lysosomal membranes, delivers bivalent cations from the cytosol into these acidic compartments where they may directly affect antimicrobial activity. Involved in iron metabolism and host natural resistance to infection with intracellular parasites. Pathogen resistance involves sequestration of Fe(2+) and Mn(2+), cofactors of both prokaryotic and eukaryotic catalases and superoxide dismutases, not only to protect the macrophage against its own generation of reactive oxygen species, but to deny the cations to the pathogen for synthesis of its protective enzymes. The protein is Natural resistance-associated macrophage protein 1 (SLC11A1) of Gallus gallus (Chicken).